The sequence spans 1603 residues: Vitellogenin-4 (1603 aa).

Positions 1 to 15 are cleaved as a signal peptide; sequence MKSIIIASLVALAIA. The 662-residue stretch at 24 to 685 folds into the Vitellogenin domain; sequence FSPKSEYVYK…EKNAFLPKEV (662 aa). Asn1266 carries N-linked (GlcNAc...) asparagine glycosylation. Residues 1306–1475 enclose the VWFD domain; it reads ATCKVDQSEV…SYLLKNEECE (170 aa). Disulfide bonds link Cys1308/Cys1438 and Cys1330/Cys1474.

In terms of tissue distribution, expressed in the intestine of adult hermaphrodites.

Its subcellular location is the secreted. Its function is as follows. Precursor of the egg-yolk proteins that are sources of nutrients during embryonic development. Together with other vitellogenins, may play a role in modulating life-span, acting via induction of autophagy and lysosomal lipolysis. In Caenorhabditis elegans, this protein is Vitellogenin-4 (vit-4).